The chain runs to 240 residues: DNA repair protein RecO (240 aa).

The protein belongs to the RecO family.

Its function is as follows. Involved in DNA repair and RecF pathway recombination. This Wolbachia pipientis wMel protein is DNA repair protein RecO.